The following is a 405-amino-acid chain: 4-hydroxy-3-methylbut-2-en-1-yl diphosphate synthase (flavodoxin) (405 aa).

[4Fe-4S] cluster-binding residues include Cys297, Cys300, Cys343, and Glu350.

Belongs to the IspG family. [4Fe-4S] cluster is required as a cofactor.

The catalysed reaction is (2E)-4-hydroxy-3-methylbut-2-enyl diphosphate + oxidized [flavodoxin] + H2O + 2 H(+) = 2-C-methyl-D-erythritol 2,4-cyclic diphosphate + reduced [flavodoxin]. It functions in the pathway isoprenoid biosynthesis; isopentenyl diphosphate biosynthesis via DXP pathway; isopentenyl diphosphate from 1-deoxy-D-xylulose 5-phosphate: step 5/6. Its function is as follows. Converts 2C-methyl-D-erythritol 2,4-cyclodiphosphate (ME-2,4cPP) into 1-hydroxy-2-methyl-2-(E)-butenyl 4-diphosphate. The chain is 4-hydroxy-3-methylbut-2-en-1-yl diphosphate synthase (flavodoxin) from Francisella tularensis subsp. mediasiatica (strain FSC147).